A 361-amino-acid polypeptide reads, in one-letter code: Methyltransferase LUC1 (361 aa).

5 residues coordinate S-adenosyl-L-homocysteine: Tyr18, Asn66, Asp89, Ser126, and Phe127. The Mg(2+) site is built by Gln156 and Phe233.

It belongs to the methyltransferase superfamily. Type-7 methyltransferase family. The cofactor is Mg(2+).

The protein operates within mycotoxin biosynthesis. Its function is as follows. Methyltransferase; part of the gene cluster that mediates the biosynthesis of the mycotoxin lucilactaene and the lucilactaene-related compound NG-391 that act as cell cycle inhibitors with potent growth inhibitory activity against malarial parasites, moderate growth inhibitory activity against cancer cells, and no activity against bacteria and fungi. LUC1 performs the last step of the pathway and methylates the hydroxyl group of demethyllucilactaene at C-21 to yeald lucilactaene. The pathway begins with the hybrid PKS-NRPS synthetase LUC5 which is responsible for the condensation of one acetyl-coenzyme A (CoA) unit with six malonyl-CoA units and the amide linkage of the arising heptaketide and homoserine, subsequently releasing the first intermediate prelucilactaene B. Both the cytochrome P450 monooxygenase LUC2 and the hydrolase LUC6 function in parallel in modification of prelucilactaene B. LUC6 may catalyze the 2-pyrrolidone ring formation to form prelucilactaene C from prelucilactaene B, followed by C-15 hydroxylation by the same enzyme to give prelucilactaene D, which is then converted to prelucilactaene E by epoxidation, and finally to prelucilactaene F by cyclization. Prelucilactane D, prelucilactaene E, and prelucilactaene F can be converted to dihydrolucilactaene, NG391, and lucilactaene, respectively, via C-20 methyl group hydroxylation by the cytochrome P450 monooxygenase LUC2. However, LUC2, unlike FUS8 in fusarin C biosynthesis, is not enough for the full oxidation of the C-20 methyl group into carboxylic acid, which is a prerequisite for the final methylation step. The aldehyde dehydrogenase LUC3 is involved in the biosynthesis by further oxidation of the C-20 alcoholic analog prelucilactaene G into a carboxylic derivative. This unidentified carboxylic derivative may be converted to demethyllucilactaene. As the last step, the methyltransferase LUC1 methylates the hydroxyl group at C-21 of demethyllucilactaene to generate lucilactaene. This chain is Methyltransferase LUC1, found in Fusarium sp.